The primary structure comprises 547 residues: Chaperonin GroEL (547 aa).

Residues 30-33 (TLGP), Lys51, 87-91 (DGTTT), Gly415, 479-481 (NAA), and Asp495 each bind ATP.

It belongs to the chaperonin (HSP60) family. As to quaternary structure, forms a cylinder of 14 subunits composed of two heptameric rings stacked back-to-back. Interacts with the co-chaperonin GroES.

It localises to the cytoplasm. It catalyses the reaction ATP + H2O + a folded polypeptide = ADP + phosphate + an unfolded polypeptide.. Together with its co-chaperonin GroES, plays an essential role in assisting protein folding. The GroEL-GroES system forms a nano-cage that allows encapsulation of the non-native substrate proteins and provides a physical environment optimized to promote and accelerate protein folding. The protein is Chaperonin GroEL of Pseudomonas syringae pv. syringae (strain B728a).